The sequence spans 175 residues: NADH-ubiquinone oxidoreductase chain 6 (175 aa).

5 consecutive transmembrane segments (helical) span residues 1–21 (MMTY…VGFS), 25–45 (SPIY…GIVL), 47–67 (FGGS…MLVV), 88–108 (AVLG…CYIL), and 149–169 (YGTW…LVIM).

The protein belongs to the complex I subunit 6 family. Core subunit of respiratory chain NADH dehydrogenase (Complex I) which is composed of 45 different subunits.

The protein localises to the mitochondrion inner membrane. The catalysed reaction is a ubiquinone + NADH + 5 H(+)(in) = a ubiquinol + NAD(+) + 4 H(+)(out). Functionally, core subunit of the mitochondrial membrane respiratory chain NADH dehydrogenase (Complex I) which catalyzes electron transfer from NADH through the respiratory chain, using ubiquinone as an electron acceptor. Essential for the catalytic activity and assembly of complex I. This Halichoerus grypus (Gray seal) protein is NADH-ubiquinone oxidoreductase chain 6 (MT-ND6).